The following is an 880-amino-acid chain: Alanine--tRNA ligase (880 aa).

Residues H567, H571, C669, and H673 each coordinate Zn(2+).

It belongs to the class-II aminoacyl-tRNA synthetase family. It depends on Zn(2+) as a cofactor.

Its subcellular location is the cytoplasm. The catalysed reaction is tRNA(Ala) + L-alanine + ATP = L-alanyl-tRNA(Ala) + AMP + diphosphate. Functionally, catalyzes the attachment of alanine to tRNA(Ala) in a two-step reaction: alanine is first activated by ATP to form Ala-AMP and then transferred to the acceptor end of tRNA(Ala). Also edits incorrectly charged Ser-tRNA(Ala) and Gly-tRNA(Ala) via its editing domain. The polypeptide is Alanine--tRNA ligase (Bacillus mycoides (strain KBAB4) (Bacillus weihenstephanensis)).